Here is a 1577-residue protein sequence, read N- to C-terminus: Dynamin-binding protein (1577 aa).

M1 carries the post-translational modification N-acetylmethionine. 3 consecutive SH3 domains span residues 2–61 (EPGS…IVTI), 66–126 (EGER…ELCL), and 145–204 (YSMG…LLGP). Residues 209–242 (DESVNAGSGDDSTLNDEVDVSPEEVESEGDEDDQ) form a disordered region. The span at 221-242 (TLNDEVDVSPEEVESEGDEDDQ) shows a compositional bias: acidic residues. The SH3 4 domain occupies 243–302 (QAGTYGIALYRFQALESNELDFEVGDKIRILGTLEDGWLEGRLKGKTGIFPHRFVKLCPS). Disordered stretches follow at residues 307-361 (ETMA…EEPL) and 375-437 (GQDE…SRQC). Over residues 400 to 410 (PDLSQEVNGIS) the composition is skewed to polar residues. Residue S494 is modified to Phosphoserine. Disordered stretches follow at residues 519 to 547 (PERP…DNLD) and 590 to 681 (RGSS…SEYT). Over residues 617–626 (TPTSTSPHLL) the composition is skewed to low complexity. Residues 632 to 651 (KPGPPLVVRPSRPAPLPPPT) show a composition bias toward pro residues. The segment covering 652 to 662 (QQRLNTASPKP) has biased composition (polar residues). A compositionally biased stretch (basic and acidic residues) spans 672 to 681 (APEKEGSEYT). S684 is modified (phosphoserine). Positions 705 to 755 (LDMHTRAQEELNLLLEEKQDESLRAETLETLKSYESTIQSLNLELQQLREM) form a coiled coil. The DH domain maps to 784–967 (KRAKVVAELL…KEINANINEY (184 aa)). One can recognise a BAR domain in the interval 1008-1217 (LKHLTGFAPQ…LKASDREGNL (210 aa)). The SH3 5 domain occupies 1285–1348 (PPEKLFHVQR…YSSFLKPYNP (64 aa)). Residues 1353–1375 (SDSSVVSHSSTESEHSGSSPSFH) show a composition bias toward low complexity. 2 disordered regions span residues 1353 to 1381 (SDSS…NSSS) and 1415 to 1510 (ETLG…LGSS). Composition is skewed to polar residues over residues 1418 to 1428 (GVSSNTGNPET) and 1484 to 1497 (DQGS…SRAC). Residues 1513 to 1576 (EGNQVYFAIY…PSNYIRKTEY (64 aa)) form the SH3 6 domain.

In terms of assembly, binds DNM1 via its N-terminal SH3 domains. The C-terminal SH3 domain binds a complex containing actin, tubulin, Hsp70 and actin-regulatory proteins, such as ENAH, EVL, WIRE, CR16, WAVE1 and NAP1L1. Interacts with FASLG. Interacts (via SH3 domain 6) with WASL. Interacts (via SH3 domain 6) interacts with ENAH. Interacts (via C-terminal domain) with TJP1; required for the apical cell-cell junction localization of DNMBP. As to expression, widely expressed.

It localises to the cytoplasm. The protein resides in the golgi apparatus. The protein localises to the golgi stack. It is found in the cytoskeleton. Its subcellular location is the synapse. It localises to the cell junction. Its function is as follows. Plays a critical role as a guanine nucleotide exchange factor (GEF) for CDC42 in several intracellular processes associated with the actin and microtubule cytoskeleton. Regulates the structure of apical junctions in epithelial cells. Participates in the normal lumenogenesis of epithelial cell cysts by regulating spindle orientation. Plays a role in ciliogenesis. May play a role in membrane trafficking between the cell surface and the Golgi. The chain is Dynamin-binding protein from Rattus norvegicus (Rat).